The sequence spans 183 residues: dCTP deaminase (183 aa).

106 to 111 (KSTYAR) is a dCTP binding site. Glu132 (proton donor/acceptor) is an active-site residue. Residues Gln151, Tyr165, and Gln175 each coordinate dCTP.

This sequence belongs to the dCTP deaminase family. As to quaternary structure, homotrimer.

It carries out the reaction dCTP + H2O + H(+) = dUTP + NH4(+). Its pathway is pyrimidine metabolism; dUMP biosynthesis; dUMP from dCTP (dUTP route): step 1/2. Catalyzes the deamination of dCTP to dUTP. In Gluconobacter oxydans (strain 621H) (Gluconobacter suboxydans), this protein is dCTP deaminase.